The following is a 90-amino-acid chain: Co-chaperonin GroES (90 aa).

It belongs to the GroES chaperonin family. Heptamer of 7 subunits arranged in a ring. Interacts with the chaperonin GroEL.

Its subcellular location is the cytoplasm. Together with the chaperonin GroEL, plays an essential role in assisting protein folding. The GroEL-GroES system forms a nano-cage that allows encapsulation of the non-native substrate proteins and provides a physical environment optimized to promote and accelerate protein folding. GroES binds to the apical surface of the GroEL ring, thereby capping the opening of the GroEL channel. The sequence is that of Co-chaperonin GroES from Phocaeicola vulgatus (strain ATCC 8482 / DSM 1447 / JCM 5826 / CCUG 4940 / NBRC 14291 / NCTC 11154) (Bacteroides vulgatus).